The following is a 110-amino-acid chain: Large ribosomal subunit protein uL22 (110 aa).

Belongs to the universal ribosomal protein uL22 family. Part of the 50S ribosomal subunit.

Its function is as follows. This protein binds specifically to 23S rRNA; its binding is stimulated by other ribosomal proteins, e.g. L4, L17, and L20. It is important during the early stages of 50S assembly. It makes multiple contacts with different domains of the 23S rRNA in the assembled 50S subunit and ribosome. Functionally, the globular domain of the protein is located near the polypeptide exit tunnel on the outside of the subunit, while an extended beta-hairpin is found that lines the wall of the exit tunnel in the center of the 70S ribosome. The chain is Large ribosomal subunit protein uL22 from Shewanella frigidimarina (strain NCIMB 400).